Consider the following 510-residue polypeptide: Myosin-binding protein C, cardiac-type (510 aa).

Ig-like C2-type domains lie at 177–269 (KKST…VKEP), 270–347 (PYSS…TVKT), and 378–438 (RDQA…SFIP).

It belongs to the immunoglobulin superfamily. MyBP family. Heart.

In terms of biological role, thick filament-associated protein located in the crossbridge region of vertebrate striated muscle a bands. In vitro it binds MHC, F-actin and native thin filaments, and modifies the activity of actin-activated myosin ATPase. It may modulate muscle contraction or may play a more structural role. In Ambystoma mexicanum (Axolotl), this protein is Myosin-binding protein C, cardiac-type.